The following is a 339-amino-acid chain: Anthranilate phosphoribosyltransferase (339 aa).

5-phospho-alpha-D-ribose 1-diphosphate is bound by residues Gly79, 82-83 (GD), Thr87, 89-92 (NIST), 107-115 (KHGNRAVSS), and Ser119. Gly79 contacts anthranilate. Ser91 provides a ligand contact to Mg(2+). Position 110 (Asn110) interacts with anthranilate. Position 165 (Arg165) interacts with anthranilate. The Mg(2+) site is built by Asp224 and Glu225.

Belongs to the anthranilate phosphoribosyltransferase family. In terms of assembly, homodimer. The cofactor is Mg(2+).

The catalysed reaction is N-(5-phospho-beta-D-ribosyl)anthranilate + diphosphate = 5-phospho-alpha-D-ribose 1-diphosphate + anthranilate. The protein operates within amino-acid biosynthesis; L-tryptophan biosynthesis; L-tryptophan from chorismate: step 2/5. Catalyzes the transfer of the phosphoribosyl group of 5-phosphorylribose-1-pyrophosphate (PRPP) to anthranilate to yield N-(5'-phosphoribosyl)-anthranilate (PRA). The polypeptide is Anthranilate phosphoribosyltransferase (Geobacillus thermodenitrificans (strain NG80-2)).